The chain runs to 412 residues: Acyl-[acyl-carrier-protein] hydrolase FATB2, chloroplastic (412 aa).

2 stretches are compositionally biased toward low complexity: residues 1–13 (TAASSAFFPVPSA) and 56–66 (GSSVGLKSGGL). The transit peptide at 1 to 46 (TAASSAFFPVPSADTSSRPGKLGNGPSSFSPLKPKSIPNGGLQVKA) directs the protein to the chloroplast. The disordered stretch occupies residues 1–78 (TAASSAFFPV…HDDAPSAPPP (78 aa)). Active-site residues include Asn-311, His-313, and Cys-348.

Belongs to the acyl-ACP thioesterase family.

The protein localises to the plastid. It localises to the chloroplast. The catalysed reaction is tetradecanoyl-[ACP] + H2O = tetradecanoate + holo-[ACP] + H(+). It catalyses the reaction hexadecanoyl-[ACP] + H2O = hexadecanoate + holo-[ACP] + H(+). Plays an essential role in chain termination during de novo fatty acid synthesis. Possesses thioesterase activity for medium chain acyl-ACPs. Substrate preference is 14:0 &gt; 16:0 &gt; 16:1. This is Acyl-[acyl-carrier-protein] hydrolase FATB2, chloroplastic from Cuphea viscosissima (Blue waxweed).